Here is a 219-residue protein sequence, read N- to C-terminus: Protein GrpE (219 aa).

Disordered stretches follow at residues 1 to 32 and 59 to 87; these read MSTTDNTNGDDRRPGQPEWDDEENNFEHLDAT and FDGVDASTEDPGATVGETSTLESELAERT.

The protein belongs to the GrpE family. Homodimer.

The protein resides in the cytoplasm. In terms of biological role, participates actively in the response to hyperosmotic and heat shock by preventing the aggregation of stress-denatured proteins, in association with DnaK and GrpE. It is the nucleotide exchange factor for DnaK and may function as a thermosensor. Unfolded proteins bind initially to DnaJ; upon interaction with the DnaJ-bound protein, DnaK hydrolyzes its bound ATP, resulting in the formation of a stable complex. GrpE releases ADP from DnaK; ATP binding to DnaK triggers the release of the substrate protein, thus completing the reaction cycle. Several rounds of ATP-dependent interactions between DnaJ, DnaK and GrpE are required for fully efficient folding. The polypeptide is Protein GrpE (Corynebacterium diphtheriae (strain ATCC 700971 / NCTC 13129 / Biotype gravis)).